Here is a 102-residue protein sequence, read N- to C-terminus: Small ribosomal subunit protein eS24 (102 aa).

The protein belongs to the eukaryotic ribosomal protein eS24 family.

The chain is Small ribosomal subunit protein eS24 from Methanococcoides burtonii (strain DSM 6242 / NBRC 107633 / OCM 468 / ACE-M).